Consider the following 352-residue polypeptide: Divinyl chlorophyll a/b light-harvesting protein PcbH (352 aa).

6 consecutive transmembrane segments (helical) span residues 27-47 (FIGS…ASCL), 88-108 (VATI…AGLA), 140-160 (FILG…VEWA), 202-222 (VMSG…FHIA), 242-262 (AVLS…AFWA), and 309-329 (LVNV…WHAL).

The protein belongs to the PsbB/PsbC family. IsiA/Pcb subfamily. The antenna complex consists of divinyl chlorophylls (a and b) and divinyl chlorophyll a/b binding proteins and binds more divinyl chlorophyll b than does the antenna complex from high-light-adapted Prochlorococcus. Requires divinyl chlorophyll a as cofactor. Divinyl chlorophyll b is required as a cofactor.

It localises to the cellular thylakoid membrane. The antenna complex functions as a light receptor, it captures and delivers excitation energy to photosystems II and I. The Prochlorales pcb genes are not related to higher plant LHCs. This chain is Divinyl chlorophyll a/b light-harvesting protein PcbH (pcbH), found in Prochlorococcus marinus (strain SARG / CCMP1375 / SS120).